A 319-amino-acid chain; its full sequence is Acetyl-coenzyme A carboxylase carboxyl transferase subunit alpha (319 aa).

The 262-residue stretch at 35–296 folds into the CoA carboxyltransferase C-terminal domain; it reads NIDEEVHRLR…KAQLLADLAD (262 aa).

This sequence belongs to the AccA family. In terms of assembly, acetyl-CoA carboxylase is a heterohexamer composed of biotin carboxyl carrier protein (AccB), biotin carboxylase (AccC) and two subunits each of ACCase subunit alpha (AccA) and ACCase subunit beta (AccD).

The protein localises to the cytoplasm. The enzyme catalyses N(6)-carboxybiotinyl-L-lysyl-[protein] + acetyl-CoA = N(6)-biotinyl-L-lysyl-[protein] + malonyl-CoA. It participates in lipid metabolism; malonyl-CoA biosynthesis; malonyl-CoA from acetyl-CoA: step 1/1. Functionally, component of the acetyl coenzyme A carboxylase (ACC) complex. First, biotin carboxylase catalyzes the carboxylation of biotin on its carrier protein (BCCP) and then the CO(2) group is transferred by the carboxyltransferase to acetyl-CoA to form malonyl-CoA. In Escherichia coli O139:H28 (strain E24377A / ETEC), this protein is Acetyl-coenzyme A carboxylase carboxyl transferase subunit alpha.